The following is a 353-amino-acid chain: Phosphoribosylformylglycinamidine cyclo-ligase (353 aa).

This sequence belongs to the AIR synthase family.

Its subcellular location is the cytoplasm. It catalyses the reaction 2-formamido-N(1)-(5-O-phospho-beta-D-ribosyl)acetamidine + ATP = 5-amino-1-(5-phospho-beta-D-ribosyl)imidazole + ADP + phosphate + H(+). The protein operates within purine metabolism; IMP biosynthesis via de novo pathway; 5-amino-1-(5-phospho-D-ribosyl)imidazole from N(2)-formyl-N(1)-(5-phospho-D-ribosyl)glycinamide: step 2/2. The protein is Phosphoribosylformylglycinamidine cyclo-ligase of Pseudomonas aeruginosa (strain ATCC 15692 / DSM 22644 / CIP 104116 / JCM 14847 / LMG 12228 / 1C / PRS 101 / PAO1).